Consider the following 232-residue polypeptide: Noggin (232 aa).

The N-terminal stretch at 1–27 (MERCPSLGVTLYALVVVLGLRATPAGG) is a signal peptide. A glycan (N-linked (GlcNAc...) asparagine) is linked at Asn-62. A disordered region spans residues 77-96 (GFMATSPPEDRPGGGGGAAG). Disulfide bonds link Cys-155-Cys-192, Cys-178-Cys-228, Cys-184-Cys-230, and Cys-207-Cys-215.

Belongs to the noggin family. In terms of assembly, homodimer. Interacts with GDF5; inhibits chondrocyte differentiation.

The protein localises to the secreted. Functionally, inhibitor of bone morphogenetic proteins (BMP) signaling which is required for growth and patterning of the neural tube and somite. Essential for cartilage morphogenesis and joint formation. Inhibits chondrocyte differentiation through its interaction with GDF5 and, probably, GDF6. The sequence is that of Noggin (NOG) from Homo sapiens (Human).